Reading from the N-terminus, the 224-residue chain is Glycerol-3-phosphate acyltransferase (224 aa).

6 helical membrane passes run 4 to 24 (FVIV…GSIN), 60 to 80 (LVIF…VYFV), 88 to 108 (SVVV…FPIW), 124 to 144 (IISV…LIII), 149 to 169 (IVSF…FIPW), and 182 to 202 (WPWW…IWSH).

Belongs to the PlsY family. In terms of assembly, probably interacts with PlsX.

The protein localises to the cell membrane. The catalysed reaction is an acyl phosphate + sn-glycerol 3-phosphate = a 1-acyl-sn-glycero-3-phosphate + phosphate. It participates in lipid metabolism; phospholipid metabolism. Catalyzes the transfer of an acyl group from acyl-phosphate (acyl-PO(4)) to glycerol-3-phosphate (G3P) to form lysophosphatidic acid (LPA). This enzyme utilizes acyl-phosphate as fatty acyl donor, but not acyl-CoA or acyl-ACP. This Mycoplasmopsis pulmonis (strain UAB CTIP) (Mycoplasma pulmonis) protein is Glycerol-3-phosphate acyltransferase.